Reading from the N-terminus, the 82-residue chain is Small ribosomal subunit protein bS16 (82 aa).

The protein belongs to the bacterial ribosomal protein bS16 family.

This is Small ribosomal subunit protein bS16 from Deinococcus deserti (strain DSM 17065 / CIP 109153 / LMG 22923 / VCD115).